We begin with the raw amino-acid sequence, 424 residues long: Virion nicking-joining enzyme (424 aa).

PLD phosphodiesterase domains follow at residues 110 to 137 and 320 to 346; these read LGGV…DWRS and YSRV…TGNY.

It belongs to the orthopoxvirus OPG042 family.

It is found in the virion. Functionally, DNA nicking enzyme that cleaves extruded cruciform DNA at its tip. Probably nicks viral hairpins. In Vaccinia virus (strain Western Reserve) (VACV), this protein is Virion nicking-joining enzyme (OPG042).